The following is a 65-amino-acid chain: Small, acid-soluble spore protein H 1 (65 aa).

Belongs to the SspH family.

The protein localises to the spore core. The protein is Small, acid-soluble spore protein H 1 of Clostridium botulinum (strain Langeland / NCTC 10281 / Type F).